A 229-amino-acid chain; its full sequence is 2,3-bisphosphoglycerate-dependent phosphoglycerate mutase (229 aa).

Residues 7–14 (RHGQSEWN), 20–21 (TG), Arg59, 86–89 (ERHY), Lys97, 113–114 (RR), and 182–183 (GN) contribute to the substrate site. Catalysis depends on His8, which acts as the Tele-phosphohistidine intermediate. Glu86 (proton donor/acceptor) is an active-site residue.

It belongs to the phosphoglycerate mutase family. BPG-dependent PGAM subfamily.

It carries out the reaction (2R)-2-phosphoglycerate = (2R)-3-phosphoglycerate. Its pathway is carbohydrate degradation; glycolysis; pyruvate from D-glyceraldehyde 3-phosphate: step 3/5. Catalyzes the interconversion of 2-phosphoglycerate and 3-phosphoglycerate. The polypeptide is 2,3-bisphosphoglycerate-dependent phosphoglycerate mutase (Listeria monocytogenes serotype 4a (strain HCC23)).